We begin with the raw amino-acid sequence, 139 residues long: Mitochondrial intermembrane space import and assembly protein 40 (139 aa).

3 disulfide bridges follow: C53–C55, C64–C97, and C74–C87. The CHCH domain maps to 61 to 105; that stretch reads SGPCGEQFKSAFSCFHYSQEEIKGSDCLDQFRAMQECMQKYPDIY. 2 short sequence motifs (cx9C motif) span residues 64–74 and 87–97; these read CGEQFKSAFSC and CLDQFRAMQEC. Residues 102 to 139 are disordered; the sequence is PDIYPQEDDEDEAEKEKQNKEAEAFSTETSDTKEESSS. The segment covering 115 to 124 has biased composition (basic and acidic residues); sequence EKEKQNKEAE.

As to quaternary structure, monomer. Can form homooligomers.

The protein resides in the mitochondrion intermembrane space. In terms of biological role, central component of a redox-sensitive mitochondrial intermembrane space import machinery which is required for the biogenesis of respiratory chain complexes. Functions as chaperone and catalyzes the formation of disulfide bonds in substrate proteins, such as COX17 or MICU1. Required for the import and folding of small cysteine-containing proteins (small Tim) in the mitochondrial intermembrane space (IMS). Precursor proteins to be imported into the IMS are translocated in their reduced form into the mitochondria. In Xenopus tropicalis (Western clawed frog), this protein is Mitochondrial intermembrane space import and assembly protein 40 (chchd4).